Here is a 443-residue protein sequence, read N- to C-terminus: MRRIPRIPSTASALCSSSSSVASTSAAPLRTLRAAADSSSICQSCSFSTQTSATRNRVWQNTVQTQRRCASTVTETTPEAPVAAAAAETATESTETVEQQRKRKGGFFETQRQVNLVLPGQPTRADAPEKIRDPNYEPATSGAGLQEIGGMSDWWSKPEHFRDGGKQFEYQGFAPQEKITDPRLLKVILRRALAEGLALKKFGANPKNPADMASIIGNGDHWQRTVSVEMCRGENGELSLKNESDLQKVWILMRNAAEKTYYQREWQEEINRLRSLGEKEQAKQLLEEGKKLGYRLKSEEGSLVKLTVDEAVELRKSWNNDWKEAIIRDPVVKFYAAKRIQKMTGHILSDGKLTSIQTVANFMDALVTPPKPKKLAEQIEQSSILPELPNVKVYPRRVTPVDKERMVGRWKVIQKELQKRELPVLGTGNHGKYVELKWLGSKQ.

Residues 121–145 (QPTRADAPEKIRDPNYEPATSGAGL) form a disordered region. The span at 126–135 (DAPEKIRDPN) shows a compositional bias: basic and acidic residues.

The protein belongs to the mitochondrion-specific ribosomal protein mL50 family. Component of the mitochondrial large ribosomal subunit (mt-LSU). Mature N.crassa 74S mitochondrial ribosomes consist of a small (37S) and a large (54S) subunit. The 37S small subunit contains a 16S ribosomal RNA (16S mt-rRNA) and 32 different proteins. The 54S large subunit contains a 23S rRNA (23S mt-rRNA) and 42 different proteins.

The protein resides in the mitochondrion. Component of the mitochondrial ribosome (mitoribosome), a dedicated translation machinery responsible for the synthesis of mitochondrial genome-encoded proteins, including at least some of the essential transmembrane subunits of the mitochondrial respiratory chain. The mitoribosomes are attached to the mitochondrial inner membrane and translation products are cotranslationally integrated into the membrane. In Neurospora crassa (strain ATCC 24698 / 74-OR23-1A / CBS 708.71 / DSM 1257 / FGSC 987), this protein is Large ribosomal subunit protein mL50 (mrpl13).